A 609-amino-acid chain; its full sequence is Phosphomethylpyrimidine synthase (609 aa).

Residues Asn219, Met248, Tyr277, His313, 333 to 335 (SRG), 374 to 377 (DGLR), and Glu413 each bind substrate. His417 serves as a coordination point for Zn(2+). Tyr440 contacts substrate. His481 is a binding site for Zn(2+). 3 residues coordinate [4Fe-4S] cluster: Cys561, Cys564, and Cys569.

Belongs to the ThiC family. [4Fe-4S] cluster serves as cofactor.

It carries out the reaction 5-amino-1-(5-phospho-beta-D-ribosyl)imidazole + S-adenosyl-L-methionine = 4-amino-2-methyl-5-(phosphooxymethyl)pyrimidine + CO + 5'-deoxyadenosine + formate + L-methionine + 3 H(+). It participates in cofactor biosynthesis; thiamine diphosphate biosynthesis. Catalyzes the synthesis of the hydroxymethylpyrimidine phosphate (HMP-P) moiety of thiamine from aminoimidazole ribotide (AIR) in a radical S-adenosyl-L-methionine (SAM)-dependent reaction. This chain is Phosphomethylpyrimidine synthase, found in Deinococcus geothermalis (strain DSM 11300 / CIP 105573 / AG-3a).